The sequence spans 544 residues: Probable protein kinase UbiB (544 aa).

The 382-residue stretch at 123-504 folds into the Protein kinase domain; that stretch reads DFDENALASA…QRWQKKMFVL (382 aa). ATP-binding positions include 129–137 and Lys-155; that span reads LASASIAQV. Asp-290 serves as the catalytic Proton acceptor. Transmembrane regions (helical) follow at residues 501–521 and 523–543; these read MFVLIVGIVIFSVTLWQFAAL and LAISAGLFLVGFLVWLIGFLL.

The protein belongs to the ABC1 family. UbiB subfamily.

The protein resides in the cell inner membrane. Its pathway is cofactor biosynthesis; ubiquinone biosynthesis [regulation]. Is probably a protein kinase regulator of UbiI activity which is involved in aerobic coenzyme Q (ubiquinone) biosynthesis. In Histophilus somni (strain 129Pt) (Haemophilus somnus), this protein is Probable protein kinase UbiB.